The sequence spans 327 residues: E3 ubiquitin ligase Rnf121 (327 aa).

Transmembrane regions (helical) follow at residues 50–70 (MHAEMVLILIATLVVAQLLLV), 79–96 (SYNMVTLFQMWIVPVYFT), 99–119 (LHWWRFLGIWIVFSIITAYIT), 148–168 (ATGIVGYIAVMFTLFGLNLLF), and 173–193 (EDAMDFGISLLFYGLYYGVLG). Residues 226–276 (CAVCGQQIFVDVNEEGIIENTYRLSCNHVFHEFCIRGWCIVGKKQTCPYCK) form an RING-type; atypical zinc finger.

Belongs to the RNF121 family.

The protein localises to the endoplasmic reticulum membrane. The enzyme catalyses S-ubiquitinyl-[E2 ubiquitin-conjugating enzyme]-L-cysteine + [acceptor protein]-L-lysine = [E2 ubiquitin-conjugating enzyme]-L-cysteine + N(6)-ubiquitinyl-[acceptor protein]-L-lysine.. It participates in protein modification; protein ubiquitination. E3 ubiquitin ligase which accepts ubiquitin and transfers it to substrates thereby promoting their degradation by the endoplasmic reticulum-associated degradation (ERAD) pathway which is a pathway involved in ubiquitin-dependent degradation of misfolded endoplasmic reticulum proteins. May regulate the unfolded protein response to reduce endoplasmic reticulum stress. The chain is E3 ubiquitin ligase Rnf121 (rnf121) from Xenopus laevis (African clawed frog).